We begin with the raw amino-acid sequence, 1320 residues long: Centrosomin (1320 aa).

The segment at 20–41 (ASFDVPRPPGGGNSPLPSQGRS) is disordered. Residues 97-516 (RKTVDVKMEL…SSQEKEIKKL (420 aa)) adopt a coiled-coil conformation. The span at 517-530 (NQENEQSANKENDC) shows a compositional bias: basic and acidic residues. Residues 517–554 (NQENEQSANKENDCAKTVISPSSSGRSMSDNEASSQEM) form a disordered region. Over residues 535-554 (ISPSSSGRSMSDNEASSQEM) the composition is skewed to polar residues. Ser545 bears the Phosphoserine mark. 2 coiled-coil regions span residues 626-654 (EADL…KVDV) and 712-983 (NSLL…LKLA). The short motif at 644–656 (RNKLLQRKVDVLF) is the Nuclear localization signal element. Thr782 bears the Phosphothreonine mark. Residue Ser785 is modified to Phosphoserine. A compositionally biased stretch (basic and acidic residues) spans 810 to 823 (KKELEKRRSSEGQR). Disordered stretches follow at residues 810-849 (KKEL…SEPD) and 863-893 (SNSL…NRNS). Positions 831 to 843 (LPSQQFDNQSESE) are enriched in polar residues. Phosphoserine occurs at positions 874, 876, 878, 1191, 1234, 1237, and 1239. Residues 1220–1249 (VEMKTEGSASPKAKSEESTSPDSKSNVATG) are disordered. Positions 1237–1247 (STSPDSKSNVA) are enriched in polar residues.

As to quaternary structure, monomer. As to expression, developing visceral mesoderm of the midgut, the central and peripheral nervous system, and developing gonads. Isoform J: Expressed in ovaries, testis and embryos. Isoform A: Expressed in testis only.

The protein localises to the cytoplasm. It localises to the cytoskeleton. The protein resides in the microtubule organizing center. It is found in the centrosome. Its subcellular location is the flagellum basal body. The protein localises to the perinuclear region. In terms of biological role, core component of the centrosome throughout spermatogenesis. May participate in mitotic spindle assembly and the mechanics of morphogenesis through an interaction with microtubules, either directly or indirectly. Is a target of several homeotic genes. In Drosophila melanogaster (Fruit fly), this protein is Centrosomin (cnn).